We begin with the raw amino-acid sequence, 137 residues long: Peptide methionine sulfoxide reductase MsrB (137 aa).

Positions 7-129 (PTENIEKLTD…NSASLNFVDD (123 aa)) constitute a MsrB domain. 4 residues coordinate Zn(2+): cysteine 46, cysteine 49, cysteine 95, and cysteine 98. Residue cysteine 118 is the Nucleophile of the active site.

This sequence belongs to the MsrB Met sulfoxide reductase family. Zn(2+) serves as cofactor.

It carries out the reaction L-methionyl-[protein] + [thioredoxin]-disulfide + H2O = L-methionyl-(R)-S-oxide-[protein] + [thioredoxin]-dithiol. This is Peptide methionine sulfoxide reductase MsrB from Yersinia enterocolitica serotype O:8 / biotype 1B (strain NCTC 13174 / 8081).